A 187-amino-acid polypeptide reads, in one-letter code: MVRPLNCIVAVSQNMGIGKNGDLPWPPLRNEFQYFQRMTTVSSVEGKQNLVIMGRKTWFSIPEKNRPLKDRINIVLSRELKEPPKGAHFLAKSLDDALELIEDPELTNKVDVVWIVGGSSVYKEAMNKPGHVRLFVTRIMQEFESDAFFPEIDFEKYKLLPEYPGVPLDVQEEKGIKYKFEVYEKNN.

One can recognise a DHFR domain in the interval 4 to 185; the sequence is PLNCIVAVSQ…IKYKFEVYEK (182 aa). Residues Ala10 and 16-22 each bind NADP(+); that span reads GIGKNGD. A substrate-binding site is contributed by 31-36; the sequence is EFQYFQ. 55–57 provides a ligand contact to NADP(+); that stretch reads RKT. Arg71 serves as a coordination point for substrate. Residues 77-79 and 117-124 contribute to the NADP(+) site; these read SRE and GGSSVYKE.

This sequence belongs to the dihydrofolate reductase family. As to quaternary structure, homodimer.

The protein resides in the mitochondrion. The protein localises to the cytoplasm. The enzyme catalyses (6S)-5,6,7,8-tetrahydrofolate + NADP(+) = 7,8-dihydrofolate + NADPH + H(+). The protein operates within cofactor biosynthesis; tetrahydrofolate biosynthesis; 5,6,7,8-tetrahydrofolate from 7,8-dihydrofolate: step 1/1. Key enzyme in folate metabolism. Contributes to the de novo mitochondrial thymidylate biosynthesis pathway. Catalyzes an essential reaction for de novo glycine and purine synthesis, and for DNA precursor synthesis. Binds its own mRNA and that of DHFR2. In Bos taurus (Bovine), this protein is Dihydrofolate reductase (DHFR).